The sequence spans 190 residues: MAQMSTSEIRGGVKVEVEAQPYTIISNEFVKPGKGQAFNRIKMKHLLTGRVIERTFKSGEKLNLADVAEEEMRMLYKESDGVIFMDEKSFEQIKISLESIGETVQWLLDDHVYEVIFYNGNAVNVEPPTFMEMVITDTSPGVRGDTASGRVLKPAILESGAKVQVPIFVEQGEKIKVDTRTGEYVSRVSS.

This sequence belongs to the elongation factor P family.

The protein localises to the cytoplasm. It participates in protein biosynthesis; polypeptide chain elongation. Its function is as follows. Involved in peptide bond synthesis. Stimulates efficient translation and peptide-bond synthesis on native or reconstituted 70S ribosomes in vitro. Probably functions indirectly by altering the affinity of the ribosome for aminoacyl-tRNA, thus increasing their reactivity as acceptors for peptidyl transferase. This Protochlamydia amoebophila (strain UWE25) protein is Elongation factor P 2 (efp2).